The primary structure comprises 598 residues: Elongation factor 4 (598 aa).

In terms of domain architecture, tr-type G spans Lys2–Ser183. GTP-binding positions include Asp14 to Thr19 and Asn130 to Asp133.

It belongs to the TRAFAC class translation factor GTPase superfamily. Classic translation factor GTPase family. LepA subfamily.

It is found in the cell inner membrane. It catalyses the reaction GTP + H2O = GDP + phosphate + H(+). Functionally, required for accurate and efficient protein synthesis under certain stress conditions. May act as a fidelity factor of the translation reaction, by catalyzing a one-codon backward translocation of tRNAs on improperly translocated ribosomes. Back-translocation proceeds from a post-translocation (POST) complex to a pre-translocation (PRE) complex, thus giving elongation factor G a second chance to translocate the tRNAs correctly. Binds to ribosomes in a GTP-dependent manner. The protein is Elongation factor 4 of Christiangramia forsetii (strain DSM 17595 / CGMCC 1.15422 / KT0803) (Gramella forsetii).